The sequence spans 493 residues: MNSTSLYAAIDLGSNSFHMLVVREASGSIQTLTRIKRKVRLAAGLNNDNHLSAEAMERGWQCLRLFAERLQDIPQPQIRVVATATLRLAVNAGEFIAKAQTILGCPVQVISGEEEARLIYQGVAHTTGGADQRLVVDIGGASTELVTGTGAQTTSLFSLSMGCVTWLERYFSDRNLAQENFDDAEKAARDVLRPVADELRFHGWKVCVGASGTVQALQEIMMAQGMDERITLAKLQQLKQRAIQCGRLEELEIEGLTLERALVFPSGLAILIAIFTELNIQSMTLAGGALREGLVYGMLHLAVDQDIRSRTLRNIQRRFIVDTDQANRVAKLADNFLKQVENAWHIEPISRELLLSACQLHEIGLSVDFKQAPYHAAYLVRHLDLPGYTPAQKKLLATLLLNQTNPVDLSSLHQQNAVPPRVAEQLCRLLRLAILFAGRRRDDLVPEITLQALNENLTLTLPGDWLAHHPLGKELIDQESQWQSYVHWPLDVR.

This sequence belongs to the GppA/Ppx family. GppA subfamily.

The enzyme catalyses guanosine 3'-diphosphate 5'-triphosphate + H2O = guanosine 3',5'-bis(diphosphate) + phosphate + H(+). It participates in purine metabolism; ppGpp biosynthesis; ppGpp from GTP: step 2/2. Its function is as follows. Catalyzes the conversion of pppGpp to ppGpp. Guanosine pentaphosphate (pppGpp) is a cytoplasmic signaling molecule which together with ppGpp controls the 'stringent response', an adaptive process that allows bacteria to respond to amino acid starvation, resulting in the coordinated regulation of numerous cellular activities. This Salmonella dublin (strain CT_02021853) protein is Guanosine-5'-triphosphate,3'-diphosphate pyrophosphatase.